Reading from the N-terminus, the 167-residue chain is MRILGIDPGTLVVGYGIIETANDELTLVGFSSLTPPACAPIPQRLAYIYKGLVEVIELYQPDEVAVESPFADKNIKSALAIGKAQAVALLAAANHSLPVTEYSPACIKSRVAGSGNASKEQIQEMVRLLLNLAEIPQPNDAADALAVAICHHSQRAFTNIISQGDLT.

Active-site residues include aspartate 7, glutamate 67, and aspartate 140. 3 residues coordinate Mg(2+): aspartate 7, glutamate 67, and aspartate 140.

This sequence belongs to the RuvC family. Homodimer which binds Holliday junction (HJ) DNA. The HJ becomes 2-fold symmetrical on binding to RuvC with unstacked arms; it has a different conformation from HJ DNA in complex with RuvA. In the full resolvosome a probable DNA-RuvA(4)-RuvB(12)-RuvC(2) complex forms which resolves the HJ. Mg(2+) is required as a cofactor.

Its subcellular location is the cytoplasm. It catalyses the reaction Endonucleolytic cleavage at a junction such as a reciprocal single-stranded crossover between two homologous DNA duplexes (Holliday junction).. Its function is as follows. The RuvA-RuvB-RuvC complex processes Holliday junction (HJ) DNA during genetic recombination and DNA repair. Endonuclease that resolves HJ intermediates. Cleaves cruciform DNA by making single-stranded nicks across the HJ at symmetrical positions within the homologous arms, yielding a 5'-phosphate and a 3'-hydroxyl group; requires a central core of homology in the junction. The consensus cleavage sequence is 5'-(A/T)TT(C/G)-3'. Cleavage occurs on the 3'-side of the TT dinucleotide at the point of strand exchange. HJ branch migration catalyzed by RuvA-RuvB allows RuvC to scan DNA until it finds its consensus sequence, where it cleaves and resolves the cruciform DNA. This Dehalococcoides mccartyi (strain ATCC BAA-2100 / JCM 16839 / KCTC 5957 / BAV1) protein is Crossover junction endodeoxyribonuclease RuvC.